The primary structure comprises 88 residues: UPF0335 protein M446_5200 (88 aa).

This sequence belongs to the UPF0335 family.

This is UPF0335 protein M446_5200 from Methylobacterium sp. (strain 4-46).